Reading from the N-terminus, the 420-residue chain is Tyrosine--tRNA ligase (420 aa).

Tyr36 serves as a coordination point for L-tyrosine. A 'HIGH' region motif is present at residues 41–50 (PTADSMHIGH). Positions 170 and 174 each coordinate L-tyrosine. The 'KMSKS' region signature appears at 231 to 235 (KFGKS). Lys234 contacts ATP. One can recognise an S4 RNA-binding domain in the interval 353-420 (TNIVDFIVEA…KKKYFMVKYK (68 aa)).

Belongs to the class-I aminoacyl-tRNA synthetase family. TyrS type 1 subfamily. Homodimer.

It is found in the cytoplasm. It carries out the reaction tRNA(Tyr) + L-tyrosine + ATP = L-tyrosyl-tRNA(Tyr) + AMP + diphosphate + H(+). Catalyzes the attachment of tyrosine to tRNA(Tyr) in a two-step reaction: tyrosine is first activated by ATP to form Tyr-AMP and then transferred to the acceptor end of tRNA(Tyr). The polypeptide is Tyrosine--tRNA ligase (Staphylococcus carnosus (strain TM300)).